A 742-amino-acid polypeptide reads, in one-letter code: uncharacterized protein (742 aa).

The segment at 1-102 is disordered; the sequence is MMLLKRSNDN…FTQTKPNNTD (102 aa). Positions 18 to 28 are enriched in low complexity; that stretch reads NRQNRQNNRQN. Positions 48-57 are enriched in basic and acidic residues; that stretch reads RDSSRMDPVD. Polar residues-rich tracts occupy residues 60–69 and 77–99; these read TLISFTSGKP and HDTG…TKPN.

This is an uncharacterized protein from Acanthamoeba polyphaga mimivirus (APMV).